The sequence spans 217 residues: Large ribosomal subunit protein uL3 (217 aa).

The residue at position 154 (Gln-154) is an N5-methylglutamine.

The protein belongs to the universal ribosomal protein uL3 family. Part of the 50S ribosomal subunit. Forms a cluster with proteins L14 and L19. Methylated by PrmB.

In terms of biological role, one of the primary rRNA binding proteins, it binds directly near the 3'-end of the 23S rRNA, where it nucleates assembly of the 50S subunit. In Burkholderia ambifaria (strain ATCC BAA-244 / DSM 16087 / CCUG 44356 / LMG 19182 / AMMD) (Burkholderia cepacia (strain AMMD)), this protein is Large ribosomal subunit protein uL3.